The sequence spans 611 residues: Probable Xaa-Pro aminopeptidase P (611 aa).

Mn(2+) is bound by residues D408, D419, E517, and E531.

This sequence belongs to the peptidase M24B family. It depends on Mn(2+) as a cofactor.

It catalyses the reaction Release of any N-terminal amino acid, including proline, that is linked to proline, even from a dipeptide or tripeptide.. Catalyzes the removal of a penultimate prolyl residue from the N-termini of peptides. In Coccidioides posadasii (strain RMSCC 757 / Silveira) (Valley fever fungus), this protein is Probable Xaa-Pro aminopeptidase P (AMPP).